Consider the following 63-residue polypeptide: Venom peptide 2b (63 aa).

The first 22 residues, 1-22, serve as a signal peptide directing secretion; that stretch reads MRGTSFILFAVVVILGFLHGNA. AXPX repeat units lie at residues 22–25, 26–29, 32–35, 38–41, and 44–47; these read AEPL, ANPE, and ANPD. The propeptide occupies 23–48; that stretch reads EPLANPEPSANPDPLANPDPLANPEA. Leucine 62 is modified (leucine amide).

Belongs to the MCD family. Mastoparan subfamily. As to expression, expressed by the venom gland.

The protein resides in the secreted. Its subcellular location is the target cell membrane. Its function is as follows. Antimicrobial peptide with strong and moderate activity against the fungi B.cinerea (MIC=5 uM) and C.albicans (MIC=100 uM), the Gram-negative bacterium E.coli (MIC=200 uM) and the Gram-positive bacterium S.aureus (MIC=25 uM). Shows cytolytic activity against insect cell lines. Has potent hemolytic activity against human erythrocytes (EC(50)=64 uM). In vivo, peptide injection in the vicinity of the head and thorax of lepidopteran larvae induces feeding disorder followed by death due to starvation. The polypeptide is Venom peptide 2b (Eumenes pomiformis (Potter wasp)).